The following is a 124-amino-acid chain: UPF0102 protein Blon_1698/BLIJ_1758 (124 aa).

This sequence belongs to the UPF0102 family.

The chain is UPF0102 protein Blon_1698/BLIJ_1758 from Bifidobacterium longum subsp. infantis (strain ATCC 15697 / DSM 20088 / JCM 1222 / NCTC 11817 / S12).